The following is an 888-amino-acid chain: Autotaxin (888 aa).

The first 27 residues, 1–27, serve as a signal peptide directing secretion; the sequence is MARRRSCQLHQVISLFTFAVGVNICLG. Positions 28–35 are cleaved as a propeptide — removed by furin; the sequence is VTANRIKR. Residue N54 is glycosylated (N-linked (GlcNAc...) asparagine). SMB domains are found at residues 55 to 98 and 99 to 143; these read ISGS…LKTA and GGWE…GESH. Intrachain disulfides connect C59–C76, C63–C94, C74–C87, C80–C86, C103–C120, C108–C138, C118–C131, C124–C130, C149–C195, and C157–C351. The Cell attachment site signature appears at 127–129; it reads RGD. The phosphodiesterase stretch occupies residues 145 to 502; sequence VDDDCEEIKT…PTFKYKTKVP (358 aa). Zn(2+) is bound by residues D172 and T210. T210 serves as the catalytic Nucleophile. 1-(9Z-octadecenoyl)-sn-glycero-3-phosphate is bound by residues T210, N231, and D312. T210, N231, and D312 together coordinate 1-hexadecanoyl-sn-glycero-3-phosphate. 3 residues coordinate 1-tetradecanoyl-sn-glycerol 3-phosphate: T210, N231, and D312. Zn(2+) contacts are provided by D312, H316, D359, and H360. 5 disulfides stabilise this stretch: C367–C469, C414–C831, C567–C692, C569–C677, and C800–C810. N411 is a glycosylation site (N-linked (GlcNAc...) asparagine). H475 serves as a coordination point for Zn(2+). H475 provides a ligand contact to 1-(9Z-octadecenoyl)-sn-glycero-3-phosphate. H475 lines the 1-hexadecanoyl-sn-glycero-3-phosphate pocket. A 1-tetradecanoyl-sn-glycerol 3-phosphate-binding site is contributed by H475. N-linked (GlcNAc...) asparagine glycosylation occurs at N525. The nuclease-like domain stretch occupies residues 623–888; that stretch reads LYGRPAVLYR…TYLQTYESEI (266 aa). 5 residues coordinate Ca(2+): D765, D767, D769, L771, and D773. The N-linked (GlcNAc...) asparagine glycan is linked to N832. The tract at residues 855-876 is required for secretion; that stretch reads IEHLTSLDFFRKTSRSYPEILT.

The protein belongs to the nucleotide pyrophosphatase/phosphodiesterase family. Requires Zn(2+) as cofactor. It depends on Ca(2+) as a cofactor. Post-translationally, N-glycosylation, but not furin-cleavage, plays a critical role on secretion and on lysoPLD activity. In terms of processing, the interdomain disulfide bond between Cys-414 and Cys-831 is essential for catalytic activity. In terms of tissue distribution, detected in fetal serum (at protein level).

The protein localises to the secreted. The catalysed reaction is a 1-O-alkyl-sn-glycero-3-phosphoethanolamine + H2O = a 1-O-alkyl-sn-glycero-3-phosphate + ethanolamine + H(+). It carries out the reaction a 1-acyl-sn-glycero-3-phosphoethanolamine + H2O = a 1-acyl-sn-glycero-3-phosphate + ethanolamine + H(+). It catalyses the reaction 1-(9Z-octadecenoyl)-sn-glycero-3-phosphoethanolamine + H2O = 1-(9Z-octadecenoyl)-sn-glycero-3-phosphate + ethanolamine + H(+). The enzyme catalyses a 1-O-alkyl-sn-glycero-3-phosphocholine + H2O = a 1-O-alkyl-sn-glycero-3-phosphate + choline + H(+). The catalysed reaction is 1-O-(9Z-octadecenyl)-sn-glycero-3-phosphocholine + H2O = 1-O-(9Z-octadecenyl)-sn-glycero-3-phosphate + choline + H(+). It carries out the reaction 1-O-hexadecyl-sn-glycero-3-phosphocholine + H2O = 1-O-hexadecyl-sn-glycero-3-phosphate + choline + H(+). It catalyses the reaction a 1-O-(1Z-alkenyl)-sn-glycero-3-phosphocholine + H2O = a 1-O-(1Z-alkenyl)-sn-glycero-3-phosphate + choline + H(+). The enzyme catalyses a 1-acyl-sn-glycero-3-phosphocholine + H2O = a 1-acyl-sn-glycero-3-phosphate + choline + H(+). The catalysed reaction is 1-dodecanoyl-sn-glycero-3-phosphocholine + H2O = 1-dodecanoyl-sn-glycerol 3-phosphate + choline + H(+). It carries out the reaction 1-(9Z-octadecenoyl)-sn-glycero-3-phosphocholine + H2O = 1-(9Z-octadecenoyl)-sn-glycero-3-phosphate + choline + H(+). It catalyses the reaction 1-tetradecanoyl-sn-glycero-3-phosphocholine + H2O = 1-tetradecanoyl-sn-glycerol 3-phosphate + choline + H(+). The enzyme catalyses 1-decanoyl-sn-glycero-3-phosphocholine + H2O = 1-decanoyl-sn-glycero-3-phosphate + choline + H(+). The catalysed reaction is 1-octadecanoyl-sn-glycero-3-phosphocholine + H2O = 1-octadecanoyl-sn-glycero-3-phosphate + choline + H(+). It carries out the reaction 1-hexadecanoyl-sn-glycero-3-phosphocholine + H2O = 1-hexadecanoyl-sn-glycero-3-phosphate + choline + H(+). It catalyses the reaction 1-hexanoyl-sn-glycero-3-phosphocholine + H2O = 1-hexanoyl-sn-glycero-3-phosphate + choline + H(+). The enzyme catalyses 1-(9Z,12Z)-octadecadienoyl-sn-glycero-3-phosphocholine + H2O = 1-(9Z,12Z)-octadecadienoyl-sn-glycero-3-phosphate + choline + H(+). The catalysed reaction is sphing-4-enine-phosphocholine + H2O = sphing-4-enine 1-phosphate + choline + H(+). It carries out the reaction 1-(5Z,8Z,11Z,14Z-eicosatetraenoyl)-sn-glycero-3-phosphocholine + H2O = 1-(5Z,8Z,11Z,14Z-eicosatetraenoyl)-sn-glycero-3-phosphate + choline + H(+). It catalyses the reaction a 2-acyl-sn-glycero-3-phosphocholine + H2O = a 2-acyl-sn-glycerol 3-phosphate + choline + H(+). The enzyme catalyses a 1,2-diacyl-sn-glycero-3-phosphocholine + H2O = a 1,2-diacyl-sn-glycero-3-phosphate + choline + H(+). The catalysed reaction is 1,2-dioctanoyl-sn-glycero-3-phosphocholine + H2O = 1,2-dioctanoyl-sn-glycero-3-phosphate + choline + H(+). It carries out the reaction 1,2-didecanoyl-sn-glycero-3-phosphocholine + H2O = 1,2-didecanoyl-sn-glycero-3-phosphate + choline + H(+). It catalyses the reaction a 1-acyl-sn-glycero-3-phospho-L-serine + H2O = a 1-acyl-sn-glycero-3-phosphate + L-serine + H(+). The enzyme catalyses 1-(9Z-octadecenoyl)-sn-glycero-3-phospho-L-serine + H2O = 1-(9Z-octadecenoyl)-sn-glycero-3-phosphate + L-serine + H(+). The catalysed reaction is a 2-acyl-sn-glycero-3-phospho-L-serine + H2O = a 2-acyl-sn-glycerol 3-phosphate + L-serine + H(+). Secreted lysophospholipase D that hydrolyzes lysophospholipids to produce the signaling molecule lysophosphatidic acid (LPA) in extracellular fluids. Its major substrate is lysophosphatidylcholine. Can also act on sphingosylphosphorylcholine producing sphingosine-1-phosphate, a modulator of cell motility. Can hydrolyze, in vitro, bis-pNPP, to some extent pNP-TMP, and barely ATP. Involved in several motility-related processes such as angiogenesis and neurite outgrowth. Acts as an angiogenic factor by stimulating migration of smooth muscle cells and microtubule formation. Stimulates migration of melanoma cells, probably via a pertussis toxin-sensitive G protein. May have a role in induction of parturition. Possible involvement in cell proliferation and adipose tissue development. Required for LPA production in activated platelets, cleaves the sn-1 lysophospholipids to generate sn-1 lysophosphatidic acids containing predominantly 18:2 and 20:4 fatty acids. Shows a preference for the sn-1 to the sn-2 isomer of 1-O-alkyl-sn-glycero-3-phosphocholine (lyso-PAF). The protein is Autotaxin of Bos taurus (Bovine).